A 246-amino-acid polypeptide reads, in one-letter code: Ribonuclease PH (246 aa).

Phosphate-binding positions include R91 and 129 to 131 (GTR).

The protein belongs to the RNase PH family. As to quaternary structure, homohexameric ring arranged as a trimer of dimers.

The enzyme catalyses tRNA(n+1) + phosphate = tRNA(n) + a ribonucleoside 5'-diphosphate. In terms of biological role, phosphorolytic 3'-5' exoribonuclease that plays an important role in tRNA 3'-end maturation. Removes nucleotide residues following the 3'-CCA terminus of tRNAs; can also add nucleotides to the ends of RNA molecules by using nucleoside diphosphates as substrates, but this may not be physiologically important. Probably plays a role in initiation of 16S rRNA degradation (leading to ribosome degradation) during starvation. This chain is Ribonuclease PH, found in Paraburkholderia phymatum (strain DSM 17167 / CIP 108236 / LMG 21445 / STM815) (Burkholderia phymatum).